A 152-amino-acid chain; its full sequence is MVVTATRLDRLSEAVERALPEGTELVEARFSRGPLLTLLVDREGGPVDHEFCARIISIVAPALEEEGYSGMIEVSSPGIERPLTRPSHFRRFIGRRVRVRVGEPVDGRRNFTGVIERVADAGFVLRLSEDGEEVELPFGSVTRAHLKEDLDK.

It belongs to the RimP family.

It is found in the cytoplasm. Its function is as follows. Required for maturation of 30S ribosomal subunits. The protein is Ribosome maturation factor RimP of Rubrobacter xylanophilus (strain DSM 9941 / JCM 11954 / NBRC 16129 / PRD-1).